Here is a 237-residue protein sequence, read N- to C-terminus: Methylosome subunit pICln (237 aa).

Serine 2 is modified (N-acetylserine). A phosphoserine mark is found at serine 102, serine 144, serine 193, serine 195, serine 198, and serine 210. Residues leucine 135–glutamine 159 form a disordered region. The span at proline 139–aspartate 153 shows a compositional bias: acidic residues. Threonine 223 is modified (phosphothreonine).

This sequence belongs to the pICln (TC 1.A.47) family. In terms of assembly, component of the methylosome, a 20S complex containing at least PRMT5/SKB1, WDR77/MEP50 and CLNS1A/pICln. May mediate SNRPD1 and SNRPD3 methylation. Forms a 6S pICln-Sm complex composed of CLNS1A/pICln, SNRPD1, SNRPD2, SNRPE, SNRPF and SNRPG; ring-like structure where CLNS1A/pICln mimics additional Sm proteins and which is unable to assemble into the core snRNP. Interacts with LSM10 and LSM11.

The protein localises to the cytoplasm. Its subcellular location is the cytosol. It localises to the nucleus. The protein resides in the cytoskeleton. Its function is as follows. Involved in both the assembly of spliceosomal snRNPs and the methylation of Sm proteins. Chaperone that regulates the assembly of spliceosomal U1, U2, U4 and U5 small nuclear ribonucleoproteins (snRNPs), the building blocks of the spliceosome, and thereby plays an important role in the splicing of cellular pre-mRNAs. Most spliceosomal snRNPs contain a common set of Sm proteins SNRPB, SNRPD1, SNRPD2, SNRPD3, SNRPE, SNRPF and SNRPG that assemble in a heptameric protein ring on the Sm site of the small nuclear RNA to form the core snRNP (Sm core). In the cytosol, the Sm proteins SNRPD1, SNRPD2, SNRPE, SNRPF and SNRPG are trapped in an inactive 6S pICln-Sm complex by the chaperone CLNS1A that controls the assembly of the core snRNP. Dissociation by the SMN complex of CLNS1A from the trapped Sm proteins and their transfer to an SMN-Sm complex triggers the assembly of core snRNPs and their transport to the nucleus. The polypeptide is Methylosome subunit pICln (CLNS1A) (Homo sapiens (Human)).